The following is a 447-amino-acid chain: SNF1-related protein kinase regulatory subunit gamma-1-like (447 aa).

N-acetylalanine is present on Ala2. A Phosphoserine modification is found at Ser35. 4 CBS domains span residues 54–120 (QVPG…SAEL), 214–275 (SFRW…GRDW), 292–350 (MSPN…PEVF), and 374–433 (LAIP…PNYF).

Belongs to the 5'-AMP-activated protein kinase gamma subunit family. Subunit of a probable heterotrimeric complex consisting of an alpha catalytic (KIN10 or KIN11) subunit, and a beta (KINB) and a gamma (KING or SNF4) non-catalytic regulatory subunits.

Regulatory subunit of the probable trimeric SNF1-related protein kinase (SnRK) complex, which may play a role in a signal transduction cascade regulating gene expression and carbohydrate metabolism in higher plants. This Arabidopsis thaliana (Mouse-ear cress) protein is SNF1-related protein kinase regulatory subunit gamma-1-like (CBSCBS2).